A 447-amino-acid chain; its full sequence is Beclin-1 (447 aa).

Residues 105–124 (TMENLSRRLKVTSNLFDIMS) carry the BH3 motif. Residues 109–156 (LSRRLKVTSNLFDIMSGQTDIDHPLCEECTDTLLDHLDTQLNITENEC) form an interaction with BCL2 and BCL2L1 isoform Bcl-X(L) region. Positions 140–214 (TLLDHLDTQL…VAKELDEGRN (75 aa)) form a coiled coil. An evolutionary conserved domain (ECD) region spans residues 242–447 (DDLKSVDNQM…AWVSSQFYNR (206 aa)). A Glycyl lysine isopeptide (Lys-Gly) (interchain with G-Cter in ubiquitin) cross-link involves residue Lys399. A required for membrane-association region spans residues 422–447 (WTKALKFMLTNLKWGLAWVSSQFYNR).

The protein belongs to the beclin family. Component of the PI3K (PI3KC3/PI3K-III/class III phosphatidylinositol 3-kinase) complex. Interacts with the poly-Gln domain of ATXN3; the interaction causes deubiquitination at Lys-399 and stabilizes BECN1. In terms of processing, polyubiquitinated at Lys-399 with 'Lys-48'-linkages. 'Lys-48'-linked polyubiquitination of Lys-399 leads to degradation. Deubiquitinated by ATXN3, leading to stabilization.

The protein localises to the cytoplasm. Its subcellular location is the golgi apparatus. It localises to the trans-Golgi network membrane. The protein resides in the endosome membrane. It is found in the endoplasmic reticulum membrane. The protein localises to the mitochondrion membrane. Its subcellular location is the endosome. It localises to the cytoplasmic vesicle. The protein resides in the autophagosome. Its function is as follows. Plays a central role in autophagy. Acts as a core subunit of different PI3K complex forms that mediate formation of phosphatidylinositol 3-phosphate and are believed to play a role in multiple membrane trafficking pathways: PI3KC3-C1 is involved in initiation of autophagosomes and PI3KC3-C2 in maturation of autophagosomes and endocytosis. Involved in regulation of degradative endocytic trafficking and required for the abscission step in cytokinesis, probably in the context of PI3KC3-C2. Essential for the formation of PI3KC3-C2 but not PI3KC3-C1 PI3K complex forms. Involved in endocytosis including endosome formation in neuronal cells. The sequence is that of Beclin-1 (becn1) from Danio rerio (Zebrafish).